Consider the following 311-residue polypeptide: N-acetyl-gamma-glutamyl-phosphate reductase (311 aa).

Cysteine 117 is a catalytic residue.

The protein belongs to the NAGSA dehydrogenase family. Type 2 subfamily.

The protein resides in the cytoplasm. It catalyses the reaction N-acetyl-L-glutamate 5-semialdehyde + phosphate + NADP(+) = N-acetyl-L-glutamyl 5-phosphate + NADPH + H(+). It functions in the pathway amino-acid biosynthesis; L-arginine biosynthesis; N(2)-acetyl-L-ornithine from L-glutamate: step 3/4. Functionally, catalyzes the NADPH-dependent reduction of N-acetyl-5-glutamyl phosphate to yield N-acetyl-L-glutamate 5-semialdehyde. This Brucella anthropi (strain ATCC 49188 / DSM 6882 / CCUG 24695 / JCM 21032 / LMG 3331 / NBRC 15819 / NCTC 12168 / Alc 37) (Ochrobactrum anthropi) protein is N-acetyl-gamma-glutamyl-phosphate reductase.